The chain runs to 241 residues: Uridylate kinase (241 aa).

Residues 10–13 (KLSG), G53, and R57 each bind ATP. Residues D72 and 133 to 140 (AGSPYFST) each bind UMP. The ATP site is built by N161, Y167, and D170.

Belongs to the UMP kinase family. As to quaternary structure, homohexamer.

The protein resides in the cytoplasm. It catalyses the reaction UMP + ATP = UDP + ADP. Its pathway is pyrimidine metabolism; CTP biosynthesis via de novo pathway; UDP from UMP (UMPK route): step 1/1. Inhibited by UTP. Functionally, catalyzes the reversible phosphorylation of UMP to UDP. The sequence is that of Uridylate kinase from Aster yellows witches'-broom phytoplasma (strain AYWB).